A 312-amino-acid chain; its full sequence is uncharacterized protein (312 aa).

Residues serine 200, aspartate 261, and histidine 292 each act as charge relay system in the active site.

Belongs to the AB hydrolase superfamily. AB hydrolase 2 family.

This is an uncharacterized protein from Acanthamoeba polyphaga mimivirus (APMV).